A 154-amino-acid chain; its full sequence is Ribosome maturation factor RimP (154 aa).

Belongs to the RimP family.

Its subcellular location is the cytoplasm. In terms of biological role, required for maturation of 30S ribosomal subunits. This chain is Ribosome maturation factor RimP, found in Cyanothece sp. (strain PCC 7425 / ATCC 29141).